Reading from the N-terminus, the 54-residue chain is Relaxin (54 aa).

Gln1 is subject to Pyrrolidone carboxylic acid. 3 disulfide bridges follow: Cys10-Cys41, Cys22-Cys54, and Cys40-Cys45.

It belongs to the insulin family. Heterodimer of a B chain and an A chain linked by two disulfide bonds.

The protein localises to the secreted. Its function is as follows. Relaxin is an ovarian hormone that acts with estrogen to produce dilatation of the birth canal in many mammals. The sequence is that of Relaxin from Balaenoptera acutorostrata (Common minke whale).